Reading from the N-terminus, the 368-residue chain is MIKKTILNDTHQALGAKMVDFSGWEMPIHYGSQIDEHHHVRRNAGIFDVSHMTVIDLHGTQVRPLLRRLLANSVDKLKVPGKALYSCMLNPQGGVIDDLIVYYLREDYFRFIVNAATREKDLAWINTQASAFNVRVEERADLAMLAVQGPAARAQVTNLLAETHRDAVEKLGRFAALEVASHSKKPLFISRTGYTGEDGFEILLPQEETITLWNALLKTGVKPIGLGARDTLRLEAGMNLYGQDMDEQVSPYEAALGWTVMLDEGRNFIGRNVLEQQKTNGVSRQMIGLLMDEKGVLRHGQKVLTAQGEGHILSGTFSPTLNKAIGFARVPAGKPSEVRVNIRDREIPVRVVKFPFVREGQTQPNIFD.

This sequence belongs to the GcvT family. In terms of assembly, the glycine cleavage system is composed of four proteins: P, T, L and H.

The enzyme catalyses N(6)-[(R)-S(8)-aminomethyldihydrolipoyl]-L-lysyl-[protein] + (6S)-5,6,7,8-tetrahydrofolate = N(6)-[(R)-dihydrolipoyl]-L-lysyl-[protein] + (6R)-5,10-methylene-5,6,7,8-tetrahydrofolate + NH4(+). The glycine cleavage system catalyzes the degradation of glycine. In Xylella fastidiosa (strain M23), this protein is Aminomethyltransferase.